The following is a 533-amino-acid chain: UDP-glucuronosyltransferase 1-2 (533 aa).

An N-terminal signal peptide occupies residues 1-27; the sequence is MDTGLCAPLRGLSGLLLLLCALPWAEG. 4 N-linked (GlcNAc...) asparagine glycosylation sites follow: N133, N141, N295, and N433. Residues 491–507 form a helical membrane-spanning segment; it reads VIGFLLAIVLTVVFIVY.

Belongs to the UDP-glycosyltransferase family.

The protein resides in the microsome. Its subcellular location is the endoplasmic reticulum membrane. It catalyses the reaction glucuronate acceptor + UDP-alpha-D-glucuronate = acceptor beta-D-glucuronoside + UDP + H(+). Functionally, UDPGT is of major importance in the conjugation and subsequent elimination of potentially toxic xenobiotics and endogenous compounds. In Rattus norvegicus (Rat), this protein is UDP-glucuronosyltransferase 1-2 (Ugt1a2).